The chain runs to 136 residues: MTLTLRVITPDKTVWDDSVEEIVLPSTTGQVGVLTGHAPLLTALDTGVMRVRPGKDWQAIALMGGFAEVENNEVKVLVNGAEVGDSIDKETARTEFQQAEQNLARANQGDNRQELIQATQEFKKARARFQAAGGMT.

It belongs to the ATPase epsilon chain family. F-type ATPases have 2 components, CF(1) - the catalytic core - and CF(0) - the membrane proton channel. CF(1) has five subunits: alpha(3), beta(3), gamma(1), delta(1), epsilon(1). CF(0) has three main subunits: a, b and c.

Its subcellular location is the cellular thylakoid membrane. Its function is as follows. Produces ATP from ADP in the presence of a proton gradient across the membrane. The protein is ATP synthase epsilon chain (atpC) of Prochloron didemni.